Consider the following 196-residue polypeptide: HTH-type transcriptional regulator BetI (196 aa).

In terms of domain architecture, HTH tetR-type spans 8–68; that stretch reads PVRREQLIRA…AAMRQILREL (61 aa). The segment at residues 31-50 is a DNA-binding region (H-T-H motif); sequence TVATIAKKAGLSSGIVAHYF.

It functions in the pathway amine and polyamine biosynthesis; betaine biosynthesis via choline pathway [regulation]. Repressor involved in the biosynthesis of the osmoprotectant glycine betaine. It represses transcription of the choline transporter BetT and the genes of BetAB involved in the synthesis of glycine betaine. The sequence is that of HTH-type transcriptional regulator BetI from Stenotrophomonas maltophilia (strain R551-3).